We begin with the raw amino-acid sequence, 348 residues long: Bombesin receptor-activated protein C6orf89 homolog (348 aa).

Over 1–58 the chain is Cytoplasmic; sequence MDLAANEISIYDKLSETVDLVRQTGHQCGMSEKAIEKFIRQLLEKNEPQRGPPQYPLL. A helical membrane pass occupies residues 59 to 79; the sequence is IAVYKVLLTLGLILFTAYFVI. The Extracellular portion of the chain corresponds to 80 to 348; it reads QPFSSLAPEP…ICDGTTLSDL (269 aa).

In terms of assembly, homodimer. Interacts with BRS3. Interacts (via N-terminus) with SIN3B. In terms of processing, glycosylated.

The protein resides in the golgi apparatus membrane. The protein localises to the cytoplasm. Its function is as follows. Exhibits histone deacetylase (HDAC) enhancer properties. May play a role in cell cycle progression and wound repair of bronchial epithelial cells. This is Bombesin receptor-activated protein C6orf89 homolog from Mus musculus (Mouse).